A 309-amino-acid polypeptide reads, in one-letter code: MSEINISAAAVKELREKTGAGMMDCKKALIETSGNFEEAIDFLRKKGLAVAAKKAGRIAAEGLTAVKVDGLTGVVVEVNSETDFVARNARFQDLAKDIANLAVIAKNIDTLKTSKMQSGKSVEEEIIANIATIGENLALRRMDILEISEGAIGSYVHNEVVPNLGKISVLVGLVSNAKDKAKLEALAKQIAVHVAGNNPQSIDDSSLDQALVERERKVFFEKSKEEGKPDNIIEKMVEGRIRKFFSEVVLLQQNFLFDPKLTVAEVIKNAEQELGAEIKIAKFIRYELGEGIEHEEKNFVDEVAAITRS.

An involved in Mg(2+) ion dislocation from EF-Tu region spans residues 82 to 85; that stretch reads TDFV.

Belongs to the EF-Ts family.

Its subcellular location is the cytoplasm. Its function is as follows. Associates with the EF-Tu.GDP complex and induces the exchange of GDP to GTP. It remains bound to the aminoacyl-tRNA.EF-Tu.GTP complex up to the GTP hydrolysis stage on the ribosome. In Rickettsia akari (strain Hartford), this protein is Elongation factor Ts.